Consider the following 380-residue polypeptide: Cyclohex-1-ene-1-carbonyl-CoA dehydrogenase (380 aa).

The active-site Proton acceptor is the Asp91. FAD is bound by residues Leu122, Ala124, Thr125, Ser131, and Thr157. Ser131 contacts cyclohex-1-ene-1-carbonyl-CoA. Ser131 is a binding site for cyclohexa-1,5-diene-1-carbonyl-CoA. Cyclohex-1-ene-1-carbonyl-CoA-binding residues include Lys178, Arg242, and Thr363. Cyclohexa-1,5-diene-1-carbonyl-CoA-binding residues include Lys178, Arg242, and Thr363. Residues Thr365 and Gln367 each contribute to the FAD site. Arg375 contributes to the cyclohex-1-ene-1-carbonyl-CoA binding site. Arg375 is a binding site for cyclohexa-1,5-diene-1-carbonyl-CoA.

The protein belongs to the acyl-CoA dehydrogenase family. As to quaternary structure, homotetramer. FAD is required as a cofactor.

It carries out the reaction cyclohex-1-ene-1-carbonyl-CoA + oxidized [electron-transfer flavoprotein] + H(+) = cyclohexa-1,5-diene-1-carbonyl-CoA + reduced [electron-transfer flavoprotein]. Functionally, acyl-CoA dehydrogenase involved in the anaerobic degradation of cyclohexane carboxylic acid (CHC). Catalyzes the 1,4-dehydrogenation at C3 and C6 of cyclohex-1-ene-1-carbonyl-CoA (CHeneCoA or Ch1CoA) to cyclohexa-1,5-diene-1-carbonyl-CoA (CHdieneCoA or Ch1,5CoA). Also able to catalyze, at a lower rate, the dehydrogenation at C3 and C4 of CHdieneCoA to benzoyl-CoA. This chain is Cyclohex-1-ene-1-carbonyl-CoA dehydrogenase, found in Geobacter metallireducens (strain ATCC 53774 / DSM 7210 / GS-15).